Consider the following 257-residue polypeptide: UPF0246 protein Lcho_2652 (257 aa).

Belongs to the UPF0246 family.

The chain is UPF0246 protein Lcho_2652 from Leptothrix cholodnii (strain ATCC 51168 / LMG 8142 / SP-6) (Leptothrix discophora (strain SP-6)).